A 328-amino-acid polypeptide reads, in one-letter code: Adenosine receptor A1 (328 aa).

Residues 1 to 10 (MPPSISAFQA) lie on the Extracellular side of the membrane. The chain crosses the membrane as a helical span at residues 11-33 (AYIGIEVLIALVSVPGNVLVIWA). At 34–46 (VKVNQALRDATFC) the chain is on the cytoplasmic side. A helical transmembrane segment spans residues 47–69 (FIVSLAVADVAVGALVIPLAILI). Residues 70–80 (NIGPETYFHTC) lie on the Extracellular side of the membrane. C80 and C169 are disulfide-bonded. Residues 81–102 (LMVACPVLILTQSSILALLAIA) form a helical membrane-spanning segment. The Cytoplasmic segment spans residues 103 to 123 (VDRYLRVKIPLRYKAVVTPRR). The helical transmembrane segment at 124-146 (AAVAIAGCWILSLVVGLTPMFGW) threads the bilayer. The Extracellular segment spans residues 147–176 (NNLREVQRAWAANGSVGEPVIKCEFEKVIS). N-linked (GlcNAc...) asparagine glycosylation is present at N159. The chain crosses the membrane as a helical span at residues 177–201 (MEYMVYFNFFVWVLPPLLLMVLIYL). Residues 202 to 235 (EVFYLIRRQLSKKASASSGDPHKYYGKELKIAKS) lie on the Cytoplasmic side of the membrane. A helical membrane pass occupies residues 236–259 (LALILFLFALSWLPLHILNCVTLF). The Extracellular segment spans residues 260-267 (CPSCQKPS). The helical transmembrane segment at 268–292 (ILVYTAIFLTHGNSAMNPIVYAFRI) threads the bilayer. Residues 293–328 (HKFRVTFLKIWNDHFRCRPAPAGDGDEDLPEEKPND) lie on the Cytoplasmic side of the membrane. C309 carries S-palmitoyl cysteine lipidation.

Belongs to the G-protein coupled receptor 1 family.

Its subcellular location is the cell membrane. Functionally, receptor for adenosine. The activity of this receptor is mediated by G proteins which inhibit adenylyl cyclase. This is Adenosine receptor A1 (ADORA1) from Oryctolagus cuniculus (Rabbit).